The primary structure comprises 547 residues: MAKQVAFNEEARRALKRGVDVVADAVKTTLGPRGRNVAIDKKFGSPTVTHDGVTVAKEIELKDPFENMGARLLVEAATKTNDVAGDGTTTATVLAQAIVHEGLRQVAAGANSMMIKRGLDKGTAVLLQAIRDLAKPVNDRTDISSVATISAADSSIGDLIAEVMDKVGKDGVITVEEGKGLGYETEYTEGMQFDRGYISAYFVTNSDRMESDLEDPYILITDKKISSIQEILPVLEKVLQFTKNFVIIAEDIDGEALPTLVLNKLRGTINVLAIKAPGFGDRRKAMLQDIAILTGGTVISEEIGRKLDSATVEDLGRARRVIANKDETTVIEGRGDEDAIKARIEQIRAQIETTTSDFDREKLQERLAKLAGGVAVLKVGAATEPELKERKHRVEDALSTARAAVEEGIVPGGGIALLSVLPALDSVVPANQDEKAAVLILRRALEEPIRQLARNAGEDGAVIIDTVRRLQKEKGDSTLGYNVITGEYGSMVEMGIIDPAKVTRSALQNAVSIASMILTTDALVADIPEKEAAPAPGGMGGMGGMDF.

ATP contacts are provided by residues Thr-29–Pro-32, Asp-86–Thr-90, Gly-413, and Asp-498.

This sequence belongs to the chaperonin (HSP60) family. In terms of assembly, forms a cylinder of 14 subunits composed of two heptameric rings stacked back-to-back. Interacts with the co-chaperonin GroES.

It is found in the cytoplasm. It catalyses the reaction ATP + H2O + a folded polypeptide = ADP + phosphate + an unfolded polypeptide.. Functionally, together with its co-chaperonin GroES, plays an essential role in assisting protein folding. The GroEL-GroES system forms a nano-cage that allows encapsulation of the non-native substrate proteins and provides a physical environment optimized to promote and accelerate protein folding. In Herpetosiphon aurantiacus (strain ATCC 23779 / DSM 785 / 114-95), this protein is Chaperonin GroEL.